A 549-amino-acid chain; its full sequence is Putative acyl-CoA synthetase YngI (549 aa).

ATP-binding positions include 198–206 (TSGTTGFPK), D423, R438, and K529.

It belongs to the ATP-dependent AMP-binding enzyme family.

In Bacillus subtilis (strain 168), this protein is Putative acyl-CoA synthetase YngI (yngI).